Consider the following 506-residue polypeptide: L-amino-acid oxidase (506 aa).

The first 18 residues, 1-18 (MNVFFTFSLLFLAALGSC), serve as a signal peptide directing secretion. A disulfide bridge connects residues Cys28 and Cys191. Residue Glu36 participates in Zn(2+) binding. Residues 61 to 62 (MS), Ser62, 81 to 82 (EA), Arg89, and 105 to 108 (GPMR) contribute to the FAD site. Position 108 (Arg108) interacts with substrate. Positions 111, 118, and 150 each coordinate Zn(2+). The N-linked (GlcNAc...) asparagine glycan is linked to Asn190. Asp219 contributes to the Zn(2+) binding site. His241 contacts substrate. Glu248 is a Zn(2+) binding site. Val279 lines the FAD pocket. The Zn(2+) site is built by Glu299 and His332. Cysteines 349 and 430 form a disulfide. Substrate is bound at residue Tyr390. A Zn(2+)-binding site is contributed by His458. FAD is bound by residues Glu475 and 482–487 (GWIDST). 482–483 (GW) is a substrate binding site.

This sequence belongs to the flavin monoamine oxidase family. FIG1 subfamily. As to quaternary structure, homodimer; non-covalently linked. Stabilized by a single zinc-binding site located at the dimer interface (Asp-219, His-332 and His-458). Other zinc-bind sites can be understood as transient and non-specific, and appear due to the high concentration of zinc ions used in the crystallization experiments. The cofactor is FAD. Expressed by the venom gland.

It localises to the secreted. It carries out the reaction an L-alpha-amino acid + O2 + H2O = a 2-oxocarboxylate + H2O2 + NH4(+). It catalyses the reaction L-leucine + O2 + H2O = 4-methyl-2-oxopentanoate + H2O2 + NH4(+). The catalysed reaction is L-phenylalanine + O2 + H2O = 3-phenylpyruvate + H2O2 + NH4(+). The enzyme catalyses L-tryptophan + O2 + H2O = indole-3-pyruvate + H2O2 + NH4(+). It carries out the reaction L-methionine + O2 + H2O = 4-methylsulfanyl-2-oxobutanoate + H2O2 + NH4(+). It catalyses the reaction L-isoleucine + O2 + H2O = (S)-3-methyl-2-oxopentanoate + H2O2 + NH4(+). The catalysed reaction is L-tyrosine + O2 + H2O = 3-(4-hydroxyphenyl)pyruvate + H2O2 + NH4(+). Catalyzes an oxidative deamination of predominantly hydrophobic and aromatic L-amino acids, thus producing hydrogen peroxide that may contribute to the diverse toxic effects of this enzyme. Shows high catalytic activity against L-Met, L-Leu, L-Phe, L-Trp, L-Tyr, L-Ile. Shows no or weak activity on L-Cys, L-Val, L-Gln, L-Thr, L-Ser, L-Lys, L-Arg, L-Asn, L-Glu, L-Gly, L-Pro, L-Asp and L-His. Induces platelet aggregation in platelet-rich plasma, probably due to hydrogen peroxide production, since catalase inhibits aggregation effect. Induces moderate mouse paw edema. Induces apoptosis and shows cytotoxicity against several cancer cell lines, which is inhibited by catalase. Shows hemolytic activity and antibacterial activities against both Gram-positive and Gram-negative bacteria. Has parasiticidal activities against both trypanosomes and leishmania, as a result of enzyme-catalyzed hydrogen peroxide production. Unlike other snake venom L-amino acid oxidases, does not induce hemorrhage (with 50 ug of enzyme). This chain is L-amino-acid oxidase, found in Bothrops atrox (Barba amarilla).